We begin with the raw amino-acid sequence, 176 residues long: ATP-dependent protease subunit HslV (176 aa).

The active site involves Thr2. Na(+) is bound by residues Gly157, Cys160, and Thr163.

This sequence belongs to the peptidase T1B family. HslV subfamily. A double ring-shaped homohexamer of HslV is capped on each side by a ring-shaped HslU homohexamer. The assembly of the HslU/HslV complex is dependent on binding of ATP.

The protein localises to the cytoplasm. It carries out the reaction ATP-dependent cleavage of peptide bonds with broad specificity.. With respect to regulation, allosterically activated by HslU binding. Its function is as follows. Protease subunit of a proteasome-like degradation complex believed to be a general protein degrading machinery. This chain is ATP-dependent protease subunit HslV, found in Salmonella gallinarum (strain 287/91 / NCTC 13346).